The chain runs to 26 residues: Somatostatin-1 (26 aa).

An intrachain disulfide couples cysteine 15 to cysteine 26.

This sequence belongs to the somatostatin family.

Its subcellular location is the secreted. Its function is as follows. Somatostatin inhibits the release of somatotropin. This chain is Somatostatin-1 (sst1), found in Amia calva (Bowfin).